Here is a 265-residue protein sequence, read N- to C-terminus: 4-hydroxy-tetrahydrodipicolinate reductase (265 aa).

NAD(+) contacts are provided by residues 7 to 12 (GASGRM) and aspartate 33. Residue arginine 34 coordinates NADP(+). Residues 96–98 (GTT) and 120–123 (AANM) contribute to the NAD(+) site. Histidine 153 functions as the Proton donor/acceptor in the catalytic mechanism. Histidine 154 is a binding site for (S)-2,3,4,5-tetrahydrodipicolinate. The active-site Proton donor is the lysine 157. 163–164 (GT) provides a ligand contact to (S)-2,3,4,5-tetrahydrodipicolinate.

This sequence belongs to the DapB family.

It localises to the cytoplasm. It carries out the reaction (S)-2,3,4,5-tetrahydrodipicolinate + NAD(+) + H2O = (2S,4S)-4-hydroxy-2,3,4,5-tetrahydrodipicolinate + NADH + H(+). It catalyses the reaction (S)-2,3,4,5-tetrahydrodipicolinate + NADP(+) + H2O = (2S,4S)-4-hydroxy-2,3,4,5-tetrahydrodipicolinate + NADPH + H(+). It participates in amino-acid biosynthesis; L-lysine biosynthesis via DAP pathway; (S)-tetrahydrodipicolinate from L-aspartate: step 4/4. Its function is as follows. Catalyzes the conversion of 4-hydroxy-tetrahydrodipicolinate (HTPA) to tetrahydrodipicolinate. The protein is 4-hydroxy-tetrahydrodipicolinate reductase of Burkholderia multivorans (strain ATCC 17616 / 249).